A 567-amino-acid chain; its full sequence is MTQKSPANEHDSNHFDVIILGSGMSGTQMGAILAKQQFRVLIIEESSHPRFTIGESSIPETSLMNRIIADRYGIPELDHITSFYSTQRYVASSTGIKRNFGFVFHKPGQEHDPKEFTQCVIPELPWGPESHYYRQDVDAYLLQAAIKYGCKVHQKTTVTEYHADKDGVAVTTAQGERFTGRYMIDCGGPRAPLATKFKLREEPCRFKTHSRSLYTHMLGVKPFDDIFKVKGQRWRWHEGTLHHMFEGGWLWVIPFNNHPRSTNNLVSVGLQLDPRVYPKTDISAQQEFDEFLARFPSIGAQFRDAVPVRDWVKTDRLQFSSNACVGDRYCLMLHANGFIDPLFSRGLENTAVTIHALAARLIKALRDDDFSPERFEYIERLQQKLLDHNDDFVSCCYTAFSDFRLWDAFHRLWAVGTILGQFRLVQAHARFRASRNEGDLDHLDNDPPYLGYLCADMEEYYQLFNDAKAEVEAVSAGRKPADEAAARIHALIDERDFAKPMFGFGYCITGDKPQLNNSKYSLLPAMRLMYWTQTRAPAEVKKYFDYNPMFALLKAYITTRIGLALKK.

The protein operates within antibiotic biosynthesis. Involved in the biosynthesis of the antifungal antibiotic pyrrolnitrin. Catalyzes the chlorination of monodechloroaminopyrrolnitrin (MDA) at the 3 position to form aminopyrrolnitrin (APRN). In Pseudomonas fluorescens, this protein is Monodechloroaminopyrrolnitrin halogenase PrnC (prnC).